Consider the following 983-residue polypeptide: Ephrin type-A receptor 3 (983 aa).

The signal sequence occupies residues 1-19; sequence MDRRRLPLLLLCAALGSAG. Residues 20 to 540 are Extracellular-facing; that stretch reads RLSARPGNEV…SFSISSENSQ (521 aa). Residues 28–206 enclose the Eph LBD domain; it reads EVNLLDSKTI…YFKKCPFTVK (179 aa). 5 N-linked (GlcNAc...) asparagine glycosylation sites follow: asparagine 231, asparagine 336, asparagine 390, asparagine 403, and asparagine 492. 2 Fibronectin type-III domains span residues 324–434 and 435–530; these read PPSA…TNQA and APSP…TSPD. A helical membrane pass occupies residues 541 to 564; it reads VVMIAISAAVAIILLTVVVYVLIG. Residues 565 to 983 lie on the Cytoplasmic side of the membrane; sequence RFCGYKKSKH…THTKNSPVPV (419 aa). Tyrosine 596 and tyrosine 602 each carry phosphotyrosine; by autocatalysis. The Protein kinase domain occupies 621–882; that stretch reads ISIDKVVGAG…QIVSILDKLI (262 aa). ATP contacts are provided by residues 628 to 633, lysine 653, and 700 to 706; these read GAGEFG and EYMENGS. Tyrosine 701 bears the Phosphotyrosine; by autocatalysis mark. Catalysis depends on aspartate 746, which acts as the Proton acceptor. 750 to 751 is an ATP binding site; that stretch reads RN. The residue at position 779 (tyrosine 779) is a Phosphotyrosine; by autocatalysis. Residues 911-975 enclose the SAM domain; sequence SAFRTAGDWL…VSSIKTLETH (65 aa). Positions 981 to 983 match the PDZ-binding motif; it reads VPV.

It belongs to the protein kinase superfamily. Tyr protein kinase family. Ephrin receptor subfamily. In terms of assembly, heterotetramer upon binding of the ligand. The heterotetramer is composed of an ephrin dimer and a receptor dimer. Oligomerization is probably required to induce biological responses. Post-translationally, autophosphorylates upon activation by EFNA5. Highly expressed in the developing brain and embryonic tissues. In adult, the greatest levels of expression occur in the brain. It is expressed in a graded manner across the retina with the highest expression at its temporal pole. Detectable in all other adult tissues examined, except the liver.

The protein resides in the cell membrane. The enzyme catalyses L-tyrosyl-[protein] + ATP = O-phospho-L-tyrosyl-[protein] + ADP + H(+). Functionally, receptor tyrosine kinase which binds promiscuously membrane-bound ephrin family ligands residing on adjacent cells, leading to contact-dependent bidirectional signaling into neighboring cells. The signaling pathway downstream of the receptor is referred to as forward signaling while the signaling pathway downstream of the ephrin ligand is referred to as reverse signaling. Highly promiscuous for ephrin-A ligands it binds preferentially EFNA5. Upon activation by EFNA5 regulates cell-cell adhesion, cytoskeletal organization and cell migration. Plays a role in cardiac cells migration and differentiation probably through activation by EFNA1. Involved in the retinotectal mapping of neurons. May also control the segregation but not the guidance of motor and sensory axons during neuromuscular circuit development. The protein is Ephrin type-A receptor 3 (EPHA3) of Gallus gallus (Chicken).